The chain runs to 442 residues: MKIPPQRQLAIQYNVNRVTIIKSIELLEAEGFIYTKVGSGTYVNDYLNEAHITNKWSEMMLWSSQQRSQYTVQLINKIETDDSYIHISKGELGISLMPHIQLKKAMSNTASHIEDLSFGYNNGYGYIKLRDIIVERMSKQGINVGRENVMITSGALHAIQLLSIGFLGQDAIIISNTPSYIHSTNVFEQLNFRHIDVPYNQINEINTIIDRFINFKNKAIYIEPRFNNPTGRSLTNEQKKNIITYSERHNIPIIEDDIFRDIFFSDPTPAIKTYDKLGKVIHISSFSKTIAPAIRIGWIVASEKIIEQLADVRMQIDYGSSILSQMVVYEMLKNKSYDKHLVKLRYVLKDKRDFMLNILNNLFKDIAHWEVPSGGYFVWLVFKIDIDIKYLFYELLSKEKILINPGYIYGSKEKSIRLSFAFESNENIKHALYKIYTYVKKV.

One can recognise an HTH gntR-type domain in the interval 2 to 46 (KIPPQRQLAIQYNVNRVTIIKSIELLEAEGFIYTKVGSGTYVNDY). A DNA-binding region (H-T-H motif) is located at residues 6–25 (QRQLAIQYNVNRVTIIKSIE). K288 is modified (N6-(pyridoxal phosphate)lysine).

The protein in the C-terminal section; belongs to the class-I pyridoxal-phosphate-dependent aminotransferase family. It depends on pyridoxal 5'-phosphate as a cofactor.

Its function is as follows. Positively regulates the expression of the NorB efflux pump and negatively regulates the expression of the AbcA efflux pump. Binds specifically to the promoters of norA, norB and norC and abcA genes. Could also have an aminotransferase activity. This chain is HTH-type transcriptional regulator NorG (norG), found in Staphylococcus aureus (strain Mu50 / ATCC 700699).